The primary structure comprises 89 residues: Large ribosomal subunit protein bL27 (89 aa).

Positions 1-21 (MAHKKSGGSSSNGRDSESKRL) are disordered.

Belongs to the bacterial ribosomal protein bL27 family.

The sequence is that of Large ribosomal subunit protein bL27 from Caulobacter vibrioides (strain NA1000 / CB15N) (Caulobacter crescentus).